A 303-amino-acid polypeptide reads, in one-letter code: L(+)-tartrate dehydratase subunit alpha (303 aa).

Iron-sulfur cluster is bound by residues Cys-71, Cys-190, and Cys-277.

It belongs to the class-I fumarase family. As to quaternary structure, tetramer of two alpha and two beta subunits. Iron-sulfur cluster serves as cofactor.

It catalyses the reaction (2R,3R)-tartrate = oxaloacetate + H2O. This chain is L(+)-tartrate dehydratase subunit alpha (ttdA), found in Escherichia coli O6:K15:H31 (strain 536 / UPEC).